The primary structure comprises 370 residues: Peptide chain release factor 1 (370 aa).

Position 239 is an N5-methylglutamine (glutamine 239).

This sequence belongs to the prokaryotic/mitochondrial release factor family. Post-translationally, methylated by PrmC. Methylation increases the termination efficiency of RF1.

The protein localises to the cytoplasm. Peptide chain release factor 1 directs the termination of translation in response to the peptide chain termination codons UAG and UAA. This Bacteroides fragilis (strain ATCC 25285 / DSM 2151 / CCUG 4856 / JCM 11019 / LMG 10263 / NCTC 9343 / Onslow / VPI 2553 / EN-2) protein is Peptide chain release factor 1.